The primary structure comprises 327 residues: MSHRFQTIAVVGAGAWGTALAAVAARAGRNVTLYARDADHAVRIATARENPRLPGIPLADSITVTTDLARAARADAILIVVPAQHLRGAVMHLAPLLAPGTPLVACAKGIEHSTHKFMTEVIAEAAPRATPAILSGPSFADDVARGLPTAVTLAAPDEALASALVQALGSSTFRPYHSTDVRGVEIGGAAKNVLAIAAGIVSGRDLGASALAALTTRGFAELVRLGRAYGARSETLTGLSGLGDLILTCAGPQSRNFAAGLALGRGEPLPAGKLAEGQYTAPVLVELAASRGVEMPVAQAVAAILSGTVTIDAAIEALMLRPFKAEE.

3 residues coordinate NADPH: Trp16, Arg36, and Lys108. Sn-glycerol 3-phosphate contacts are provided by Lys108, Gly136, and Ser138. Ala140 provides a ligand contact to NADPH. Sn-glycerol 3-phosphate contacts are provided by Lys191, Asp244, Ser254, Arg255, and Asn256. Lys191 acts as the Proton acceptor in catalysis. Arg255 lines the NADPH pocket. Residues Leu274 and Glu276 each coordinate NADPH.

It belongs to the NAD-dependent glycerol-3-phosphate dehydrogenase family.

It is found in the cytoplasm. It carries out the reaction sn-glycerol 3-phosphate + NAD(+) = dihydroxyacetone phosphate + NADH + H(+). It catalyses the reaction sn-glycerol 3-phosphate + NADP(+) = dihydroxyacetone phosphate + NADPH + H(+). It participates in membrane lipid metabolism; glycerophospholipid metabolism. In terms of biological role, catalyzes the reduction of the glycolytic intermediate dihydroxyacetone phosphate (DHAP) to sn-glycerol 3-phosphate (G3P), the key precursor for phospholipid synthesis. The sequence is that of Glycerol-3-phosphate dehydrogenase [NAD(P)+] from Bradyrhizobium sp. (strain ORS 278).